The chain runs to 228 residues: Ribonuclease 3 (228 aa).

In terms of domain architecture, RNase III spans Leu5–Gly127. Glu40 lines the Mg(2+) pocket. Asp44 is an active-site residue. 2 residues coordinate Mg(2+): Asp113 and Glu116. Glu116 is an active-site residue. The DRBM domain occupies Asp154–Ala224.

It belongs to the ribonuclease III family. Homodimer. The cofactor is Mg(2+).

The protein localises to the cytoplasm. The catalysed reaction is Endonucleolytic cleavage to 5'-phosphomonoester.. Its function is as follows. Digests double-stranded RNA. Involved in the processing of primary rRNA transcript to yield the immediate precursors to the large and small rRNAs (23S and 16S). Processes some mRNAs, and tRNAs when they are encoded in the rRNA operon. Processes pre-crRNA and tracrRNA of type II CRISPR loci if present in the organism. In Albidiferax ferrireducens (strain ATCC BAA-621 / DSM 15236 / T118) (Rhodoferax ferrireducens), this protein is Ribonuclease 3.